Reading from the N-terminus, the 166-residue chain is Thiol peroxidase (166 aa).

The Thioredoxin domain occupies 18–164; sequence VKVGDKAPNF…YEKAIEAAKA (147 aa). Catalysis depends on cysteine 60, which acts as the Cysteine sulfenic acid (-SOH) intermediate. An intrachain disulfide couples cysteine 60 to cysteine 94.

It belongs to the peroxiredoxin family. Tpx subfamily. As to quaternary structure, homodimer.

The enzyme catalyses a hydroperoxide + [thioredoxin]-dithiol = an alcohol + [thioredoxin]-disulfide + H2O. Its function is as follows. Thiol-specific peroxidase that catalyzes the reduction of hydrogen peroxide and organic hydroperoxides to water and alcohols, respectively. Plays a role in cell protection against oxidative stress by detoxifying peroxides. The chain is Thiol peroxidase from Halalkalibacterium halodurans (strain ATCC BAA-125 / DSM 18197 / FERM 7344 / JCM 9153 / C-125) (Bacillus halodurans).